A 277-amino-acid polypeptide reads, in one-letter code: uncharacterized protein (277 aa).

5 helical membrane passes run 46-66 (IAAI…YGGL), 73-93 (LFEG…ILWM), 143-163 (TTVI…VLIL), 174-194 (FFYA…GYGT), and 228-248 (KGLI…MEWV).

It belongs to the oxidase-dependent Fe transporter (OFeT) (TC 9.A.10.1) family.

The protein resides in the cell membrane. This is an uncharacterized protein from Archaeoglobus fulgidus (strain ATCC 49558 / DSM 4304 / JCM 9628 / NBRC 100126 / VC-16).